The chain runs to 1010 residues: Contactin-1 (1010 aa).

The signal sequence occupies residues 1–19; that stretch reads MRFFISHLVTLCFIFCVAD. Ig-like C2-type domains are found at residues 33-123, 132-215, 232-317, 322-398, 404-491, and 496-592; these read PVFE…ATLS, PEEH…KSVF, PADI…ARVY, PEWV…AELK, PTFE…GVLE, and TRIT…LVVR. 2 disulfide bridges follow: cysteine 57-cysteine 106 and cysteine 150-cysteine 203. Residues asparagine 200 and asparagine 249 are each glycosylated (N-linked (GlcNAc...) asparagine). A disulfide bridge links cysteine 254 with cysteine 301. N-linked (GlcNAc...) asparagine glycosylation occurs at asparagine 329. Disulfide bonds link cysteine 343–cysteine 382 and cysteine 427–cysteine 475. 4 N-linked (GlcNAc...) asparagine glycosylation sites follow: asparagine 448, asparagine 464, asparagine 485, and asparagine 512. Cysteine 517 and cysteine 574 are oxidised to a cystine. Asparagine 582 carries N-linked (GlcNAc...) asparagine glycosylation. Fibronectin type-III domains are found at residues 597–695, 700–797, 802–897, and 899–990; these read PPGG…TEGA, APSD…SAQD, VPTD…APPS, and RPRI…TAGV. A compositionally biased stretch (polar residues) spans 679–689; it reads GTGEPSMPSQR. The tract at residues 679–708 is disordered; that stretch reads GTGEPSMPSQRIRTEGAPPNVAPSDVGGGG. Asparagine 924 carries N-linked (GlcNAc...) asparagine glycosylation. The GPI-anchor amidated serine moiety is linked to residue serine 984. Residues 985–1010 constitute a propeptide, removed in mature form; sequence GATAGVPTLLLGLVLPALGVLAYSGF.

This sequence belongs to the immunoglobulin superfamily. Contactin family. In terms of assembly, interacts with TNR.

It is found in the cell membrane. In terms of biological role, mediates cell surface interactions during nervous system development. Interaction with TNR enhances the neurite outgrowth. The polypeptide is Contactin-1 (CNTN1) (Gallus gallus (Chicken)).